Here is a 206-residue protein sequence, read N- to C-terminus: MARYIGPKCKLSRREGTDLFLKSGVRALESKCNIEAAPGIHGQRRGRQSDYGTQLREKQKVRRIYGVLERQFRGYYQAAASKKGATGENLLQMLECRLDNVVYRMGFGSTRSESRQLVSHKAISVNGKTVNIPSYQVRPGDVVSVREKSLNQLRIVQALELCAQRGRVEWVDVDAAKKSGVFKNVPARSDLSADINENLIVELYSK.

The S4 RNA-binding domain maps to Cys96–Val156.

The protein belongs to the universal ribosomal protein uS4 family. As to quaternary structure, part of the 30S ribosomal subunit. Contacts protein S5. The interaction surface between S4 and S5 is involved in control of translational fidelity.

In terms of biological role, one of the primary rRNA binding proteins, it binds directly to 16S rRNA where it nucleates assembly of the body of the 30S subunit. Its function is as follows. With S5 and S12 plays an important role in translational accuracy. The protein is Small ribosomal subunit protein uS4 of Pseudomonas entomophila (strain L48).